The primary structure comprises 193 residues: Selenoprotein S A (193 aa).

A helical membrane pass occupies residues 29–49 (WALASYGWYILFGCIILYFLI). Positions 114–125 (IETWDRMQEGKS) are enriched in basic and acidic residues. The tract at residues 114 to 193 (IETWDRMQEG…RRGPSSGGUG (80 aa)) is disordered. A compositionally biased stretch (low complexity) spans 137–153 (SPSTSASSSPSTSSSAP). Residue Sec192 is a non-standard amino acid, selenocysteine.

This sequence belongs to the selenoprotein S family.

The protein localises to the endoplasmic reticulum membrane. The protein resides in the cytoplasm. In terms of biological role, involved in the degradation process of misfolded endoplasmic reticulum (ER) luminal proteins. Participates in the transfer of misfolded proteins from the ER to the cytosol, where they are destroyed by the proteasome in a ubiquitin-dependent manner. The chain is Selenoprotein S A (vimp-a) from Xenopus laevis (African clawed frog).